The chain runs to 541 residues: Glucose-6-phosphate isomerase (541 aa).

The active-site Proton donor is the Glu346. Residues His377 and Lys506 contribute to the active site.

It belongs to the GPI family.

It is found in the cytoplasm. The catalysed reaction is alpha-D-glucose 6-phosphate = beta-D-fructose 6-phosphate. It functions in the pathway carbohydrate biosynthesis; gluconeogenesis. Its pathway is carbohydrate degradation; glycolysis; D-glyceraldehyde 3-phosphate and glycerone phosphate from D-glucose: step 2/4. Its function is as follows. Catalyzes the reversible isomerization of glucose-6-phosphate to fructose-6-phosphate. The sequence is that of Glucose-6-phosphate isomerase from Rhizobium etli (strain ATCC 51251 / DSM 11541 / JCM 21823 / NBRC 15573 / CFN 42).